We begin with the raw amino-acid sequence, 252 residues long: Tumor necrosis factor ligand superfamily member 15 (252 aa).

The Cytoplasmic segment spans residues 1–39 (MAEELGLGFGEGVPVEVLPEGCRHRPEARAGLAARSKAC). A helical; Signal-anchor for type II membrane protein transmembrane segment spans residues 40–60 (LALTCCLLSFPILAGLSTLLM). Over 61–252 (AGQLRVPGKD…DKTFFGAFLL (192 aa)) the chain is Extracellular. Residues 96–252 (PRAHLTIKKQ…DKTFFGAFLL (157 aa)) enclose the THD domain. A glycan (N-linked (GlcNAc...) asparagine) is linked at Asn137. Cysteines 163 and 203 form a disulfide. Residue Asn230 is glycosylated (N-linked (GlcNAc...) asparagine).

Belongs to the tumor necrosis factor family. As to quaternary structure, homotrimer.

It is found in the membrane. Receptor for TNFRSF25 and TNFRSF6B. Mediates activation of NF-kappa-B. Inhibits vascular endothelial growth and angiogenesis (in vitro). Promotes activation of caspases and apoptosis. Promotes splenocyte alloactivation. The chain is Tumor necrosis factor ligand superfamily member 15 (Tnfsf15) from Mus musculus (Mouse).